A 110-amino-acid chain; its full sequence is Parvalbumin alpha (110 aa).

Serine 2 is modified (N-acetylserine). Phosphoserine occurs at positions 2, 8, and 24. EF-hand domains follow at residues 39–74 (KSAD…FSSD) and 78–110 (LSAK…VAES). 6 residues coordinate Ca(2+): aspartate 52, aspartate 54, serine 56, phenylalanine 58, glutamate 60, and glutamate 63. Position 66 is a phosphoserine (serine 66). Positions 91, 93, 95, 97, and 102 each coordinate Ca(2+).

In muscle, parvalbumin is thought to be involved in relaxation after contraction. It binds two calcium ions. The polypeptide is Parvalbumin alpha (Pvalb) (Rattus norvegicus (Rat)).